A 690-amino-acid chain; its full sequence is Peroxidase (690 aa).

A signal peptide spans 1-20 (MIRARDLLLLALLGFISSAL). Cys-100 and Cys-112 are disulfide-bonded. His-185 acts as the Proton acceptor in catalysis. An N-linked (GlcNAc...) asparagine glycan is attached at Asn-310. Cys-315 and Cys-324 are oxidised to a cystine. Residue His-437 participates in heme b binding. Intrachain disulfides connect Cys-536-Cys-592 and Cys-636-Cys-662.

The protein belongs to the peroxidase family. XPO subfamily. It depends on heme b as a cofactor.

The protein resides in the secreted. It catalyses the reaction 2 a phenolic donor + H2O2 = 2 a phenolic radical donor + 2 H2O. Involved in the chorion hardening process, through protein cross-linking mediated by the formation of di- and tri-tyrosine bonds. This chain is Peroxidase (Pxd), found in Drosophila melanogaster (Fruit fly).